The sequence spans 61 residues: Small ribosomal subunit protein uS14 (61 aa).

Residues Cys-24, Cys-27, Cys-40, and Cys-43 each coordinate Zn(2+).

The protein belongs to the universal ribosomal protein uS14 family. Zinc-binding uS14 subfamily. Part of the 30S ribosomal subunit. Contacts proteins S3 and S10. It depends on Zn(2+) as a cofactor.

In terms of biological role, binds 16S rRNA, required for the assembly of 30S particles and may also be responsible for determining the conformation of the 16S rRNA at the A site. The protein is Small ribosomal subunit protein uS14 of Brevibacillus brevis (strain 47 / JCM 6285 / NBRC 100599).